Reading from the N-terminus, the 1002-residue chain is Isoleucine--tRNA ligase, mitochondrial (1002 aa).

The 'HIGH' region signature appears at 94 to 104; it reads PYANGELHLGH. Residues 668 to 672 carry the 'KMSKS' region motif; the sequence is KMSKS. K671 contributes to the ATP binding site.

Belongs to the class-I aminoacyl-tRNA synthetase family.

The protein resides in the mitochondrion matrix. The enzyme catalyses tRNA(Ile) + L-isoleucine + ATP = L-isoleucyl-tRNA(Ile) + AMP + diphosphate. In Saccharomyces cerevisiae (strain ATCC 204508 / S288c) (Baker's yeast), this protein is Isoleucine--tRNA ligase, mitochondrial (ISM1).